Consider the following 204-residue polypeptide: Somatotropin (204 aa).

A signal peptide spans 1-17 (MDRVLLLLSVLSLGVSS). Gln-18 carries the post-translational modification Pyrrolidone carboxylic acid. Zn(2+) is bound at residue His-36. Cys-69 and Cys-177 form a disulfide bridge. Residue Glu-186 participates in Zn(2+) binding. A disulfide bridge links Cys-194 with Cys-202.

It belongs to the somatotropin/prolactin family.

Its subcellular location is the secreted. In terms of biological role, growth hormone plays an important role in growth control and is involved in the regulation of several anabolic processes. Implicated as an osmoregulatory substance important for seawater adaptation. The sequence is that of Somatotropin (gh) from Sciaenops ocellatus (Red drum).